Here is a 200-residue protein sequence, read N- to C-terminus: Large ribosomal subunit protein uL4 (200 aa).

The interval 42 to 65 (TRAQKTRSEVSGGGAKPWRQKGTG) is disordered.

This sequence belongs to the universal ribosomal protein uL4 family. Part of the 50S ribosomal subunit.

Functionally, one of the primary rRNA binding proteins, this protein initially binds near the 5'-end of the 23S rRNA. It is important during the early stages of 50S assembly. It makes multiple contacts with different domains of the 23S rRNA in the assembled 50S subunit and ribosome. Its function is as follows. Forms part of the polypeptide exit tunnel. The polypeptide is Large ribosomal subunit protein uL4 (Aliivibrio fischeri (strain MJ11) (Vibrio fischeri)).